We begin with the raw amino-acid sequence, 150 residues long: Nucleoside diphosphate kinase (150 aa).

Residues lysine 9, phenylalanine 57, arginine 85, threonine 91, arginine 102, and asparagine 112 each contribute to the ATP site. Histidine 115 acts as the Pros-phosphohistidine intermediate in catalysis.

It belongs to the NDK family. Homotetramer. Requires Mg(2+) as cofactor.

The protein resides in the cytoplasm. The catalysed reaction is a 2'-deoxyribonucleoside 5'-diphosphate + ATP = a 2'-deoxyribonucleoside 5'-triphosphate + ADP. The enzyme catalyses a ribonucleoside 5'-diphosphate + ATP = a ribonucleoside 5'-triphosphate + ADP. Major role in the synthesis of nucleoside triphosphates other than ATP. The ATP gamma phosphate is transferred to the NDP beta phosphate via a ping-pong mechanism, using a phosphorylated active-site intermediate. This is Nucleoside diphosphate kinase from Symbiobacterium thermophilum (strain DSM 24528 / JCM 14929 / IAM 14863 / T).